The following is a 255-amino-acid chain: HTH-type transcriptional regulator SkgA (255 aa).

In terms of domain architecture, HTH merR-type spans 3–72; the sequence is VYTVKQMARL…LKDIQAALDQ (70 aa). Positions 6 to 25 form a DNA-binding region, H-T-H motif; the sequence is VKQMARLSGVSVRALHHYDA.

Functionally, regulates the induction of katG (catalase-peroxidase) in stationary phase. This Caulobacter vibrioides (strain ATCC 19089 / CIP 103742 / CB 15) (Caulobacter crescentus) protein is HTH-type transcriptional regulator SkgA (skgA).